A 443-amino-acid polypeptide reads, in one-letter code: Tubulin beta chain (443 aa).

Positions 11, 69, 138, 142, 143, 144, 204, and 226 each coordinate GTP. Glu-69 contributes to the Mg(2+) binding site.

Belongs to the tubulin family. As to quaternary structure, dimer of alpha and beta chains. A typical microtubule is a hollow water-filled tube with an outer diameter of 25 nm and an inner diameter of 15 nM. Alpha-beta heterodimers associate head-to-tail to form protofilaments running lengthwise along the microtubule wall with the beta-tubulin subunit facing the microtubule plus end conferring a structural polarity. Microtubules usually have 13 protofilaments but different protofilament numbers can be found in some organisms and specialized cells. Requires Mg(2+) as cofactor.

It is found in the cytoplasm. The protein resides in the cytoskeleton. Its function is as follows. Tubulin is the major constituent of microtubules, a cylinder consisting of laterally associated linear protofilaments composed of alpha- and beta-tubulin heterodimers. Microtubules grow by the addition of GTP-tubulin dimers to the microtubule end, where a stabilizing cap forms. Below the cap, tubulin dimers are in GDP-bound state, owing to GTPase activity of alpha-tubulin. The chain is Tubulin beta chain from Thalassiosira weissflogii (Marine diatom).